The primary structure comprises 679 residues: DNA ligase (679 aa).

NAD(+) is bound by residues 86 to 90 (DEAYD) and 129 to 130 (ST). Residue K167 is the N6-AMP-lysine intermediate of the active site. Residues R183, E214, and K326 each contribute to the NAD(+) site. Positions 417, 420, 433, and 439 each coordinate Zn(2+). The region spanning 599–679 (GEKSPISGKT…EAYRQLVSLD (81 aa)) is the BRCT domain.

It belongs to the NAD-dependent DNA ligase family. LigA subfamily. Mg(2+) is required as a cofactor. The cofactor is Mn(2+).

It carries out the reaction NAD(+) + (deoxyribonucleotide)n-3'-hydroxyl + 5'-phospho-(deoxyribonucleotide)m = (deoxyribonucleotide)n+m + AMP + beta-nicotinamide D-nucleotide.. DNA ligase that catalyzes the formation of phosphodiester linkages between 5'-phosphoryl and 3'-hydroxyl groups in double-stranded DNA using NAD as a coenzyme and as the energy source for the reaction. It is essential for DNA replication and repair of damaged DNA. This chain is DNA ligase, found in Desulfotalea psychrophila (strain LSv54 / DSM 12343).